The sequence spans 158 residues: Small ribosomal subunit protein uS9 (158 aa).

It belongs to the universal ribosomal protein uS9 family.

This chain is Small ribosomal subunit protein uS9, found in Brucella anthropi (strain ATCC 49188 / DSM 6882 / CCUG 24695 / JCM 21032 / LMG 3331 / NBRC 15819 / NCTC 12168 / Alc 37) (Ochrobactrum anthropi).